The following is a 77-amino-acid chain: CPVAEEHFLVPAHEARGTQGEDQRPAGAASELELQEEGPKLGEERPKPEAGALEERGPRPVVSIVRPRHGPKRKPAK.

Basic and acidic residues-rich tracts occupy residues 1 to 24 (CPVA…EDQR) and 37 to 58 (EGPK…ERGP). Positions 1–77 (CPVAEEHFLV…RHGPKRKPAK (77 aa)) are disordered. The segment covering 66 to 77 (RPRHGPKRKPAK) has biased composition (basic residues).

This is an uncharacterized protein from Macaca fascicularis (Crab-eating macaque).